The following is a 200-amino-acid chain: Imidazoleglycerol-phosphate dehydratase (200 aa).

Substrate is bound by residues Glu13, His39–His47, His68–Glu72, Arg94, and Arg116. The Mn(2+) site is built by His39, His68, His69, and Glu72. Mn(2+) is bound by residues Glu141, His165, His166, and Glu169. Substrate is bound by residues His165–Lys173 and Ser195–Lys197.

This sequence belongs to the imidazoleglycerol-phosphate dehydratase family. Mn(2+) is required as a cofactor.

It localises to the cytoplasm. It catalyses the reaction D-erythro-1-(imidazol-4-yl)glycerol 3-phosphate = 3-(imidazol-4-yl)-2-oxopropyl phosphate + H2O. It participates in amino-acid biosynthesis; L-histidine biosynthesis; L-histidine from 5-phospho-alpha-D-ribose 1-diphosphate: step 6/9. The protein is Imidazoleglycerol-phosphate dehydratase (hisB) of Lactococcus lactis subsp. lactis (strain IL1403) (Streptococcus lactis).